The chain runs to 431 residues: Histidine--tRNA ligase (431 aa).

This sequence belongs to the class-II aminoacyl-tRNA synthetase family.

It is found in the cytoplasm. It catalyses the reaction tRNA(His) + L-histidine + ATP = L-histidyl-tRNA(His) + AMP + diphosphate + H(+). This is Histidine--tRNA ligase (hisS) from Pyrococcus horikoshii (strain ATCC 700860 / DSM 12428 / JCM 9974 / NBRC 100139 / OT-3).